Reading from the N-terminus, the 157-residue chain is Peptide methionine sulfoxide reductase MsrB (157 aa).

Positions 14–137 constitute a MsrB domain; the sequence is DNDLRERLTP…NSAALRFVPL (124 aa). The active-site Nucleophile is the cysteine 126.

Belongs to the MsrB Met sulfoxide reductase family.

It catalyses the reaction L-methionyl-[protein] + [thioredoxin]-disulfide + H2O = L-methionyl-(R)-S-oxide-[protein] + [thioredoxin]-dithiol. The sequence is that of Peptide methionine sulfoxide reductase MsrB from Deinococcus radiodurans (strain ATCC 13939 / DSM 20539 / JCM 16871 / CCUG 27074 / LMG 4051 / NBRC 15346 / NCIMB 9279 / VKM B-1422 / R1).